An 86-amino-acid chain; its full sequence is Cyclin-dependent kinase inhibitor 6 (86 aa).

Low complexity predominate over residues 1-15 (MAAAAATVTAVQPAA). Residues 1–23 (MAAAAATVTAVQPAASSCGKRDG) form a disordered region.

Belongs to the CDI family. ICK/KRP subfamily.

The polypeptide is Cyclin-dependent kinase inhibitor 6 (KRP6) (Oryza sativa subsp. japonica (Rice)).